A 114-amino-acid polypeptide reads, in one-letter code: Ribonuclease P protein component (114 aa).

This sequence belongs to the RnpA family. In terms of assembly, consists of a catalytic RNA component (M1 or rnpB) and a protein subunit.

The enzyme catalyses Endonucleolytic cleavage of RNA, removing 5'-extranucleotides from tRNA precursor.. Functionally, RNaseP catalyzes the removal of the 5'-leader sequence from pre-tRNA to produce the mature 5'-terminus. It can also cleave other RNA substrates such as 4.5S RNA. The protein component plays an auxiliary but essential role in vivo by binding to the 5'-leader sequence and broadening the substrate specificity of the ribozyme. This Exiguobacterium sp. (strain ATCC BAA-1283 / AT1b) protein is Ribonuclease P protein component.